Consider the following 94-residue polypeptide: MYAILFELDTNCLNDNYEGNTYHNSYKLVNDFMIENGFTWKQGSVYFGGANIDAVTCVLVVQKLSKKYPWFSTCVKDVRMLRIEENNDLLPAIS.

It belongs to the VapD ribonuclease family. In terms of assembly, homodimer.

In terms of biological role, cleaves ssRNA, mostly between U:A. In Riemerella anatipestifer (Moraxella anatipestifer), this protein is Endoribonuclease VapD 2.